A 200-amino-acid polypeptide reads, in one-letter code: NADH-quinone oxidoreductase subunit B 2 (200 aa).

[4Fe-4S] cluster-binding residues include Cys-79, Cys-80, Cys-144, and Cys-174.

The protein belongs to the complex I 20 kDa subunit family. In terms of assembly, NDH-1 is composed of 14 different subunits. Subunits NuoB, C, D, E, F, and G constitute the peripheral sector of the complex. [4Fe-4S] cluster serves as cofactor.

It is found in the cell inner membrane. The catalysed reaction is a quinone + NADH + 5 H(+)(in) = a quinol + NAD(+) + 4 H(+)(out). Its function is as follows. NDH-1 shuttles electrons from NADH, via FMN and iron-sulfur (Fe-S) centers, to quinones in the respiratory chain. The immediate electron acceptor for the enzyme in this species is believed to be ubiquinone. Couples the redox reaction to proton translocation (for every two electrons transferred, four hydrogen ions are translocated across the cytoplasmic membrane), and thus conserves the redox energy in a proton gradient. The protein is NADH-quinone oxidoreductase subunit B 2 of Rhodopseudomonas palustris (strain BisA53).